The following is a 447-amino-acid chain: GTPase Der (447 aa).

2 consecutive EngA-type G domains span residues 3 to 167 (PVIA…QLPE) and 180 to 353 (IRLA…KAAT). Residues 9–16 (GRPNVGKS), 56–60 (DTGGF), 119–122 (NKAE), 186–193 (GRPNVGKS), 233–237 (DTAGL), and 298–301 (NKWD) contribute to the GTP site. A KH-like domain is found at 353–438 (TCKMPTPVLT…PLRIEMKTSR (86 aa)).

This sequence belongs to the TRAFAC class TrmE-Era-EngA-EngB-Septin-like GTPase superfamily. EngA (Der) GTPase family. Associates with the 50S ribosomal subunit.

Functionally, GTPase that plays an essential role in the late steps of ribosome biogenesis. This Paracidovorax citrulli (strain AAC00-1) (Acidovorax citrulli) protein is GTPase Der.